The primary structure comprises 304 residues: Tritrans,polycis-undecaprenyl-diphosphate synthase (geranylgeranyl-diphosphate specific) (304 aa).

The active site involves Asp-33. Asp-33 is a Mg(2+) binding site. Substrate-binding positions include Gly-34–Arg-37, Lys-46, His-50, and Ser-78–Glu-80. Residue Asn-81 is the Proton acceptor of the active site. Substrate contacts are provided by residues Phe-82, Arg-84, Arg-203, and Arg-209 to Ser-211.

It belongs to the UPP synthase family. Homodimer. Mg(2+) is required as a cofactor.

It carries out the reaction geranylgeranyl diphosphate + 7 isopentenyl diphosphate = tri-trans,hepta-cis-undecaprenyl diphosphate + 7 diphosphate. In terms of biological role, catalyzes the sequential condensation of isopentenyl diphosphate (IPP) with geranylgeranyl diphosphate (GGPP) to yield (2Z,6Z,10Z,14Z,18Z,22Z,26Z,30E,34E,38E)-undecaprenyl diphosphate (tritrans,heptacis-UPP). It is probably the precursor of glycosyl carrier lipids. This is Tritrans,polycis-undecaprenyl-diphosphate synthase (geranylgeranyl-diphosphate specific) from Haloarcula marismortui (strain ATCC 43049 / DSM 3752 / JCM 8966 / VKM B-1809) (Halobacterium marismortui).